Reading from the N-terminus, the 309-residue chain is Protein phosphatase 1 regulatory subunit 42 (309 aa).

7 LRR repeats span residues 29–50, 51–72, 73–94, 95–116, 117–138, 147–168, and 169–190; these read KITHINFSDKNIDAIEDLSLCK, NLSVLYLYDNCISQITNLNYAT, NLTHLYLQNNCISCIENLRSLK, KLEKLYLGGNYIAVIEGLEGLG, ELRELHVENQRLPLGEKLLFDP, SLCILNISNNNIDDITDLELLE, and NLNQLIAVDNQLLHVKDLEFLL. An LRRCT domain is found at 204–242; the sequence is NPVCLKPKYRDRLILVSKSLEFLDGKEIKNIERQFLMNW.

In terms of assembly, interacts with PPP1CC isoform gamma-2; the interaction is direct. Interacts with actin, dynein, KIF5B, KIFC1 and tubulin. Associates with microtubules. Phosphorylated; in the testis.

It is found in the cytoplasm. It localises to the cytoskeleton. Its subcellular location is the microtubule organizing center. The protein localises to the centrosome. Its function is as follows. Regulates phosphatase activity of protein phosphatase 1 (PP1) complexes in the testis. This Homo sapiens (Human) protein is Protein phosphatase 1 regulatory subunit 42.